A 73-amino-acid chain; its full sequence is Conotoxin Vc6.17 (73 aa).

The N-terminal stretch at 1-19 (MQKLIILLLVAAVLMSTQA) is a signal peptide. The propeptide occupies 20–44 (LFQEKRRKEKIDLLSKRKTDAEKQH). 3 cysteine pairs are disulfide-bonded: Cys48–Cys62, Cys55–Cys66, and Cys61–Cys71.

It belongs to the conotoxin O2 superfamily. In terms of tissue distribution, expressed by the venom duct.

Its subcellular location is the secreted. Functionally, inhibits voltage-gated ion channels. The chain is Conotoxin Vc6.17 from Conus victoriae (Queen Victoria cone).